A 577-amino-acid chain; its full sequence is Isocitrate dehydrogenase kinase/phosphatase (577 aa).

ATP-binding positions include 318–324 (APGVRGM) and K339. Residue D374 is part of the active site.

The protein belongs to the AceK family.

The protein resides in the cytoplasm. The catalysed reaction is L-seryl-[isocitrate dehydrogenase] + ATP = O-phospho-L-seryl-[isocitrate dehydrogenase] + ADP + H(+). In terms of biological role, bifunctional enzyme which can phosphorylate or dephosphorylate isocitrate dehydrogenase (IDH) on a specific serine residue. This is a regulatory mechanism which enables bacteria to bypass the Krebs cycle via the glyoxylate shunt in response to the source of carbon. When bacteria are grown on glucose, IDH is fully active and unphosphorylated, but when grown on acetate or ethanol, the activity of IDH declines drastically concomitant with its phosphorylation. In Pseudomonas aeruginosa (strain ATCC 15692 / DSM 22644 / CIP 104116 / JCM 14847 / LMG 12228 / 1C / PRS 101 / PAO1), this protein is Isocitrate dehydrogenase kinase/phosphatase.